The primary structure comprises 153 residues: Endoribonuclease YbeY (153 aa).

Positions 115, 119, and 125 each coordinate Zn(2+).

The protein belongs to the endoribonuclease YbeY family. Zn(2+) serves as cofactor.

Its subcellular location is the cytoplasm. Functionally, single strand-specific metallo-endoribonuclease involved in late-stage 70S ribosome quality control and in maturation of the 3' terminus of the 16S rRNA. The protein is Endoribonuclease YbeY of Blochmanniella floridana.